The chain runs to 70 residues: uncharacterized protein (70 aa).

This is an uncharacterized protein from Acidianus convivator (ATV).